We begin with the raw amino-acid sequence, 129 residues long: Glycine cleavage system H protein (129 aa).

The 83-residue stretch at 24 to 106 (IATIGISAFA…YGEGWLVKVR (83 aa)) folds into the Lipoyl-binding domain. Lys65 is subject to N6-lipoyllysine.

It belongs to the GcvH family. As to quaternary structure, the glycine cleavage system is composed of four proteins: P, T, L and H. (R)-lipoate serves as cofactor.

In terms of biological role, the glycine cleavage system catalyzes the degradation of glycine. The H protein shuttles the methylamine group of glycine from the P protein to the T protein. The chain is Glycine cleavage system H protein from Cyanothece sp. (strain PCC 7425 / ATCC 29141).